The primary structure comprises 162 residues: Troponin C, skeletal muscle (162 aa).

Position 1 is an N-acetylalanine (Ala-1). 4 consecutive EF-hand domains span residues 17 to 52 (EMIAEFKAAFDMFDTDGGGDISTKELGTVMRMLGQT), 53 to 88 (PTKEELDAIIEEVDEDGSGTIDFEEFLVMMVRQMKE), 93 to 128 (KSEEELAECFRIFDKNADGYIDSEELGEILRSSGES), and 129 to 162 (ITDEEIEELMKDGDKNNDGKIDFDEFLKMMEGVQ). The Ca(2+) site is built by Asp-30, Asp-32, Asp-36, Glu-41, Asp-66, Asp-68, Ser-70, Thr-72, Glu-77, Asp-106, Asn-108, Asp-110, Tyr-112, Glu-117, Asp-142, Asn-144, Asp-146, Lys-148, and Glu-153.

The protein belongs to the troponin C family.

Functionally, troponin is the central regulatory protein of striated muscle contraction. Tn consists of three components: Tn-I which is the inhibitor of actomyosin ATPase, Tn-T which contains the binding site for tropomyosin and Tn-C. The binding of calcium to Tn-C abolishes the inhibitory action of Tn on actin filaments. The sequence is that of Troponin C, skeletal muscle from Pelophylax lessonae (Pool frog).